The chain runs to 289 residues: ATP synthase gamma chain (289 aa).

This sequence belongs to the ATPase gamma chain family. As to quaternary structure, F-type ATPases have 2 components, CF(1) - the catalytic core - and CF(0) - the membrane proton channel. CF(1) has five subunits: alpha(3), beta(3), gamma(1), delta(1), epsilon(1). CF(0) has three main subunits: a, b and c.

It is found in the cell inner membrane. Functionally, produces ATP from ADP in the presence of a proton gradient across the membrane. The gamma chain is believed to be important in regulating ATPase activity and the flow of protons through the CF(0) complex. The sequence is that of ATP synthase gamma chain from Acinetobacter baylyi (strain ATCC 33305 / BD413 / ADP1).